The primary structure comprises 792 residues: Phenylalanine--tRNA ligase beta subunit (792 aa).

The tRNA-binding domain occupies 40–156 (FPRTENLIVG…AKLNDIDPLK (117 aa)). One can recognise a B5 domain in the interval 404–472 (LKDNLIDFDS…KKINVNNLEL (69 aa)). Mg(2+) is bound by residues aspartate 450, aspartate 456, glutamate 459, and glutamate 460.

This sequence belongs to the phenylalanyl-tRNA synthetase beta subunit family. Type 1 subfamily. Tetramer of two alpha and two beta subunits. Mg(2+) serves as cofactor.

It localises to the cytoplasm. The enzyme catalyses tRNA(Phe) + L-phenylalanine + ATP = L-phenylalanyl-tRNA(Phe) + AMP + diphosphate + H(+). The chain is Phenylalanine--tRNA ligase beta subunit from Malacoplasma penetrans (strain HF-2) (Mycoplasma penetrans).